Consider the following 610-residue polypeptide: UvrABC system protein C (610 aa).

The region spanning 12 to 91 (TSPGVYLYKN…IKQKKPRFNI (80 aa)) is the GIY-YIG domain. Residues 202-237 (SDLKQSLTARMNKAAEGMQFELAAKYRDLITTVEDL) enclose the UVR domain.

It belongs to the UvrC family. In terms of assembly, interacts with UvrB in an incision complex.

The protein resides in the cytoplasm. The UvrABC repair system catalyzes the recognition and processing of DNA lesions. UvrC both incises the 5' and 3' sides of the lesion. The N-terminal half is responsible for the 3' incision and the C-terminal half is responsible for the 5' incision. This chain is UvrABC system protein C, found in Koribacter versatilis (strain Ellin345).